The sequence spans 93 residues: Sec-independent protein translocase protein TatA (93 aa).

Residues 1 to 21 (MGSLSPWHWAILAVVVILLFG) form a helical membrane-spanning segment. The disordered stretch occupies residues 45–93 (EMQSENKTETSALGAQSESSAANPTPVQSQRVDPPAPSEQGHSEARPAS). Over residues 53–75 (ETSALGAQSESSAANPTPVQSQR) the composition is skewed to polar residues.

It belongs to the TatA/E family. In terms of assembly, the Tat system comprises two distinct complexes: a TatABC complex, containing multiple copies of TatA, TatB and TatC subunits, and a separate TatA complex, containing only TatA subunits. Substrates initially bind to the TatABC complex, which probably triggers association of the separate TatA complex to form the active translocon.

It is found in the cell membrane. Functionally, part of the twin-arginine translocation (Tat) system that transports large folded proteins containing a characteristic twin-arginine motif in their signal peptide across membranes. TatA could form the protein-conducting channel of the Tat system. In Mycolicibacterium paratuberculosis (strain ATCC BAA-968 / K-10) (Mycobacterium paratuberculosis), this protein is Sec-independent protein translocase protein TatA.